The sequence spans 299 residues: MIPIKTPKGVFNVWTKRIGNNPKVKVLLLAGGPGFPHDYLEAFESYFPGEGIEFYYYDELGNGNSDKPGDSSRYNVASAVDEVEQVRQALKLDSSNFYLFGHSWGGALGMEYAIKYQNNLKALIVSNMVASGKEFNRYVQQVLVKQLPPAILDTINDLSARNDYSNPKYSELVTRHFYARFICRLPLDQWPEPLNRAFSKVNTPYYLTLQGPSELGIIGSLQTWDISARLKEIAVPALFIGAGYDEMDPEHIKWMSQQVPHGQFLYCANGSHLSMYDQQPFYMNGIIRFIKEVNNSSAN.

One can recognise an AB hydrolase-1 domain in the interval 26-272 (VLLLAGGPGF…QFLYCANGSH (247 aa)). The active-site Nucleophile is the Ser-103. Asp-245 is an active-site residue. His-272 acts as the Proton donor in catalysis.

This sequence belongs to the peptidase S33 family. As to quaternary structure, monomer.

The catalysed reaction is Release of N-terminal proline from a peptide.. In terms of biological role, releases the N-terminal proline from various substrates. The chain is Proline iminopeptidase from Chitinophaga pinensis (strain ATCC 43595 / DSM 2588 / LMG 13176 / NBRC 15968 / NCIMB 11800 / UQM 2034).